We begin with the raw amino-acid sequence, 429 residues long: Tyrosine--tRNA ligase (429 aa).

Tyrosine 36 is a binding site for L-tyrosine. The short motif at 41 to 50 (PTAASLHAGH) is the 'HIGH' region element. The L-tyrosine site is built by tyrosine 171 and glutamine 175. A 'KMSKS' region motif is present at residues 231-235 (KFGKS). Lysine 234 is a binding site for ATP. An S4 RNA-binding domain is found at 360–417 (ATIVDLLVATGLAESRGAARRTVNEGGAAVNNQKIADPDWTPADGDYLHGRWLVVRRG).

The protein belongs to the class-I aminoacyl-tRNA synthetase family. TyrS type 1 subfamily. As to quaternary structure, homodimer.

Its subcellular location is the cytoplasm. The catalysed reaction is tRNA(Tyr) + L-tyrosine + ATP = L-tyrosyl-tRNA(Tyr) + AMP + diphosphate + H(+). In terms of biological role, catalyzes the attachment of tyrosine to tRNA(Tyr) in a two-step reaction: tyrosine is first activated by ATP to form Tyr-AMP and then transferred to the acceptor end of tRNA(Tyr). The polypeptide is Tyrosine--tRNA ligase (Nocardia farcinica (strain IFM 10152)).